We begin with the raw amino-acid sequence, 328 residues long: Mannitol-1-phosphate 5-dehydrogenase (328 aa).

3 to 14 (LIHFGAGNIGCG) contacts NAD(+).

Belongs to the mannitol dehydrogenase family.

It carries out the reaction D-mannitol 1-phosphate + NAD(+) = beta-D-fructose 6-phosphate + NADH + H(+). The chain is Mannitol-1-phosphate 5-dehydrogenase (mtlD) from Mycoplasma mycoides subsp. mycoides SC (strain CCUG 32753 / NCTC 10114 / PG1).